Consider the following 311-residue polypeptide: Ribosomal RNA small subunit methyltransferase H (311 aa).

S-adenosyl-L-methionine-binding positions include 32 to 34 (GGH), aspartate 52, phenylalanine 78, aspartate 99, and glutamine 106.

The protein belongs to the methyltransferase superfamily. RsmH family.

It is found in the cytoplasm. It carries out the reaction cytidine(1402) in 16S rRNA + S-adenosyl-L-methionine = N(4)-methylcytidine(1402) in 16S rRNA + S-adenosyl-L-homocysteine + H(+). In terms of biological role, specifically methylates the N4 position of cytidine in position 1402 (C1402) of 16S rRNA. The sequence is that of Ribosomal RNA small subunit methyltransferase H from Halothermothrix orenii (strain H 168 / OCM 544 / DSM 9562).